The sequence spans 218 residues: Ribose-5-phosphate isomerase A (218 aa).

Substrate-binding positions include Thr28–Thr31, Asp81–Asp84, and Lys94–Gly97. The active-site Proton acceptor is Glu103. A substrate-binding site is contributed by Lys121.

This sequence belongs to the ribose 5-phosphate isomerase family. In terms of assembly, homodimer.

The catalysed reaction is aldehydo-D-ribose 5-phosphate = D-ribulose 5-phosphate. Its pathway is carbohydrate degradation; pentose phosphate pathway; D-ribose 5-phosphate from D-ribulose 5-phosphate (non-oxidative stage): step 1/1. Its function is as follows. Catalyzes the reversible conversion of ribose-5-phosphate to ribulose 5-phosphate. The sequence is that of Ribose-5-phosphate isomerase A from Pseudoalteromonas atlantica (strain T6c / ATCC BAA-1087).